A 338-amino-acid chain; its full sequence is Porphobilinogen deaminase (338 aa).

Cys-265 bears the S-(dipyrrolylmethanemethyl)cysteine mark.

Belongs to the HMBS family. The cofactor is dipyrromethane.

It catalyses the reaction 4 porphobilinogen + H2O = hydroxymethylbilane + 4 NH4(+). It participates in porphyrin-containing compound metabolism; protoporphyrin-IX biosynthesis; coproporphyrinogen-III from 5-aminolevulinate: step 2/4. Its function is as follows. Tetrapolymerization of the monopyrrole PBG into the hydroxymethylbilane pre-uroporphyrinogen in several discrete steps. This chain is Porphobilinogen deaminase (HEM3), found in Yarrowia lipolytica (strain CLIB 122 / E 150) (Yeast).